The chain runs to 38 residues: Photosystem II reaction center protein L (38 aa).

Residues 17–37 form a helical membrane-spanning segment; sequence SLFWGLLLIFVLAVLFSSYFF.

Belongs to the PsbL family. PSII is composed of 1 copy each of membrane proteins PsbA, PsbB, PsbC, PsbD, PsbE, PsbF, PsbH, PsbI, PsbJ, PsbK, PsbL, PsbM, PsbT, PsbY, PsbZ, Psb30/Ycf12, at least 3 peripheral proteins of the oxygen-evolving complex and a large number of cofactors. It forms dimeric complexes.

Its subcellular location is the plastid. It is found in the chloroplast thylakoid membrane. Functionally, one of the components of the core complex of photosystem II (PSII). PSII is a light-driven water:plastoquinone oxidoreductase that uses light energy to abstract electrons from H(2)O, generating O(2) and a proton gradient subsequently used for ATP formation. It consists of a core antenna complex that captures photons, and an electron transfer chain that converts photonic excitation into a charge separation. This subunit is found at the monomer-monomer interface and is required for correct PSII assembly and/or dimerization. This chain is Photosystem II reaction center protein L, found in Cyanidium caldarium (Red alga).